A 526-amino-acid polypeptide reads, in one-letter code: G-protein coupled receptor 161 (526 aa).

At 1-27 (MNGSKNGTAVANSTNGLDDNGLMVLES) the chain is on the extracellular side. N-linked (GlcNAc...) asparagine glycans are attached at residues Asn2, Asn6, and Asn12. The chain crosses the membrane as a helical span at residues 28–48 (VSIIIIAILACLGNLVIVVTL). Residues 49–60 (YKKPYLLTPSNK) lie on the Cytoplasmic side of the membrane. The helical transmembrane segment at 61-81 (FVFSLTSSNLLLSVLMLPFVV) threads the bilayer. The Extracellular segment spans residues 82 to 98 (ASSVRRDWMFGVVWCNF). A disulfide bond links Cys96 and Cys174. Residue Asn97 is glycosylated (N-linked (GlcNAc...) asparagine). A helical membrane pass occupies residues 99–119 (TALLHLLVSSSSMLTLGAIAI). The Cytoplasmic segment spans residues 120–139 (DRYYAVLYPMIYPMKITGNR). The helical transmembrane segment at 140-160 (AVLAIVYIWLHSLVGCLPPLF) threads the bilayer. Topologically, residues 161–186 (GWSSFEFDRFKWTCTVSWHKEISYTA) are extracellular. The helical transmembrane segment at 187–207 (FWVTWCCLLPLVAMLVCYGVI) threads the bilayer. At 208–263 (FRVARIKARKVYCGSVVVSQEESSSQNNGRKNSNTSTSSSGSRKSLIYSGSQCKAF) the chain is on the cytoplasmic side. Residues 231–250 (SSQNNGRKNSNTSTSSSGSR) are disordered. A helical membrane pass occupies residues 264–284 (ITILVVLGTFLTTWGPYVVVI). At 285–300 (STEALLGKNSVSPQVE) the chain is on the extracellular side. A helical membrane pass occupies residues 301 to 321 (TLVSWLSFTSAVCHPLIYGLW). The Cytoplasmic portion of the chain corresponds to 322–526 (NKTVRKELLG…EEEMEREEKM (205 aa)). The tract at residues 505–526 (IDEGIVKDDDDDEEEMEREEKM) is disordered. Residues 512-526 (DDDDDEEEMEREEKM) show a composition bias toward acidic residues.

It belongs to the G-protein coupled receptor 1 family.

Its subcellular location is the cell projection. It is found in the cilium membrane. It localises to the cell membrane. Functionally, key negative regulator of Shh signaling during neural tube development. Recruited to primary cilia and acts as a regulator of the PKA-dependent basal repression machinery in Shh signaling by increasing cAMP levels, leading to promote the PKA-dependent processing of gli3 into gli3r and repress the Shh signaling. In presence of shh, it is removed from primary cilia, preventing its activity and allowing activation of the Shh signaling. Required in left/right patterning by modulating Ca(2+) levels in the cells surrounding the Kupffer vesicle. The protein is G-protein coupled receptor 161 (gpr161) of Danio rerio (Zebrafish).